The following is a 342-amino-acid chain: Holliday junction branch migration complex subunit RuvB (342 aa).

The segment at 1–185 is large ATPase domain (RuvB-L); that stretch reads MRKDYLNSNK…FGINTRLAYY (185 aa). Residues Leu-24, Arg-25, Gly-66, Lys-69, Thr-70, Thr-71, 132-134, Arg-175, Tyr-185, and Arg-222 each bind ATP; that span reads EDF. Thr-70 is a Mg(2+) binding site. Residues 186 to 256 are small ATPAse domain (RuvB-S); sequence DVTLLTQIVK…IAQMALKALD (71 aa). A head domain (RuvB-H) region spans residues 259–342; that stretch reads EDGLDEMDNR…PPQRAGTLFE (84 aa). Positions 314 and 319 each coordinate DNA.

It belongs to the RuvB family. In terms of assembly, homohexamer. Forms an RuvA(8)-RuvB(12)-Holliday junction (HJ) complex. HJ DNA is sandwiched between 2 RuvA tetramers; dsDNA enters through RuvA and exits via RuvB. An RuvB hexamer assembles on each DNA strand where it exits the tetramer. Each RuvB hexamer is contacted by two RuvA subunits (via domain III) on 2 adjacent RuvB subunits; this complex drives branch migration. In the full resolvosome a probable DNA-RuvA(4)-RuvB(12)-RuvC(2) complex forms which resolves the HJ.

The protein localises to the cytoplasm. The enzyme catalyses ATP + H2O = ADP + phosphate + H(+). Functionally, the RuvA-RuvB-RuvC complex processes Holliday junction (HJ) DNA during genetic recombination and DNA repair, while the RuvA-RuvB complex plays an important role in the rescue of blocked DNA replication forks via replication fork reversal (RFR). RuvA specifically binds to HJ cruciform DNA, conferring on it an open structure. The RuvB hexamer acts as an ATP-dependent pump, pulling dsDNA into and through the RuvAB complex. RuvB forms 2 homohexamers on either side of HJ DNA bound by 1 or 2 RuvA tetramers; 4 subunits per hexamer contact DNA at a time. Coordinated motions by a converter formed by DNA-disengaged RuvB subunits stimulates ATP hydrolysis and nucleotide exchange. Immobilization of the converter enables RuvB to convert the ATP-contained energy into a lever motion, pulling 2 nucleotides of DNA out of the RuvA tetramer per ATP hydrolyzed, thus driving DNA branch migration. The RuvB motors rotate together with the DNA substrate, which together with the progressing nucleotide cycle form the mechanistic basis for DNA recombination by continuous HJ branch migration. Branch migration allows RuvC to scan DNA until it finds its consensus sequence, where it cleaves and resolves cruciform DNA. The sequence is that of Holliday junction branch migration complex subunit RuvB from Amoebophilus asiaticus (strain 5a2).